Here is a 391-residue protein sequence, read N- to C-terminus: Arginine biosynthesis bifunctional protein ArgJ 2 (391 aa).

Substrate contacts are provided by Lys167 and Ser180. Ser180 acts as the Nucleophile in catalysis.

This sequence belongs to the ArgJ family. In terms of assembly, heterotetramer of two alpha and two beta chains.

It is found in the cytoplasm. It catalyses the reaction N(2)-acetyl-L-ornithine + L-glutamate = N-acetyl-L-glutamate + L-ornithine. It carries out the reaction L-glutamate + acetyl-CoA = N-acetyl-L-glutamate + CoA + H(+). It participates in amino-acid biosynthesis; L-arginine biosynthesis; L-ornithine and N-acetyl-L-glutamate from L-glutamate and N(2)-acetyl-L-ornithine (cyclic): step 1/1. The protein operates within amino-acid biosynthesis; L-arginine biosynthesis; N(2)-acetyl-L-ornithine from L-glutamate: step 1/4. Functionally, catalyzes two activities which are involved in the cyclic version of arginine biosynthesis: the synthesis of N-acetylglutamate from glutamate and acetyl-CoA as the acetyl donor, and of ornithine by transacetylation between N(2)-acetylornithine and glutamate. In Streptomyces clavuligerus, this protein is Arginine biosynthesis bifunctional protein ArgJ 2.